Here is an 827-residue protein sequence, read N- to C-terminus: Villin-1 (827 aa).

The necessary for homodimerization stretch occupies residues 1–126 (MTKLNAQVKG…IRKGGVASGM (126 aa)). The interval 1–734 (MTKLNAQVKG…YEDLKAELGN (734 aa)) is core. One copy of the Gelsolin-like 1 repeat lies at 28-107 (QMVPVSSSTY…EVQGNESEAF (80 aa)). LPA/PIP2-binding site regions lie at residues 112–119 (KQGIVIRK) and 138–146 (RLLHVKGKR). Gelsolin-like repeat units lie at residues 148–216 (VVAG…GEDE) and 269–342 (EVAT…SAVF). Position 366 is a phosphoserine (Ser366). 3 Gelsolin-like repeats span residues 409–489 (DLVP…PHLM), 528–595 (TKAF…ANFW), and 634–707 (TEIP…PPTF). Phosphoserine is present on Ser735. Residues 761 to 827 (SGPLPIFPLE…QNLKKEKGLF (67 aa)) enclose the HP domain. Residues 816–824 (KQQNLKKEK) are LPA/PIP2-binding site 3.

Belongs to the villin/gelsolin family. As to quaternary structure, monomer. Homodimer; homodimerization is necessary for actin-bundling. Associates with F-actin; phosphorylation at tyrosine residues decreases the association with F-actin. Interacts (phosphorylated at C-terminus tyrosine phosphorylation sites) with PLCG1 (via the SH2 domains). Interacts (phosphorylated form) with PLCG1; the interaction is enhanced by hepatocyte growth factor (HGF). In terms of processing, phosphorylated on tyrosine residues by SRC. The unphosphorylated form increases the initial rate of actin-nucleating activity, whereas the tyrosine-phosphorylated form inhibits actin-nucleating activity, enhances actin-bundling activity and enhances actin-severing activity by reducing high Ca(2+) requirements. The tyrosine-phosphorylated form does not regulate actin-capping activity. Tyrosine phosphorylation is essential for cell migration: tyrosine phosphorylation sites in the N-terminus half regulate actin reorganization and cell morphology, whereas tyrosine phosphorylation sites in the C-terminus half regulate cell migration. Tyrosine phosphorylation is induced by epidermal growth factor (EGF) and stimulates cell migration.

Its subcellular location is the cytoplasm. It is found in the cytoskeleton. It localises to the cell projection. The protein resides in the lamellipodium. The protein localises to the ruffle. Its subcellular location is the microvillus. It is found in the filopodium tip. It localises to the filopodium. Functionally, epithelial cell-specific Ca(2+)-regulated actin-modifying protein that modulates the reorganization of microvillar actin filaments. Plays a role in the actin nucleation, actin filament bundle assembly, actin filament capping and severing. Binds phosphatidylinositol 4,5-bisphosphate (PIP2) and lysophosphatidic acid (LPA); binds LPA with higher affinity than PIP2. Binding to LPA increases its phosphorylation by SRC and inhibits all actin-modifying activities. Binding to PIP2 inhibits actin-capping and -severing activities but enhances actin-bundling activity. Regulates the intestinal epithelial cell morphology, cell invasion, cell migration and apoptosis. Protects against apoptosis induced by dextran sodium sulfate (DSS) in the gastrointestinal epithelium. Appears to regulate cell death by maintaining mitochondrial integrity. Enhances hepatocyte growth factor (HGF)-induced epithelial cell motility, chemotaxis and wound repair. This chain is Villin-1 (VIL1), found in Sus scrofa (Pig).